We begin with the raw amino-acid sequence, 586 residues long: Acetylcholinesterase (586 aa).

A signal peptide spans 1–21 (MNLLVTSSLGVLLHLVVLCQA). The N-linked (GlcNAc...) asparagine glycan is linked to asparagine 80. Cysteine 88 and cysteine 115 are joined by a disulfide. Residue serine 221 is the Acyl-ester intermediate of the active site. A disulfide bridge connects residues cysteine 275 and cysteine 286. Glutamate 348 serves as the catalytic Charge relay system. Cysteine 423 and cysteine 542 are oxidised to a cystine. A glycan (N-linked (GlcNAc...) asparagine) is linked at asparagine 437. Histidine 461 functions as the Charge relay system in the catalytic mechanism. N-linked (GlcNAc...) asparagine glycans are attached at residues asparagine 478 and asparagine 554. Serine 564 carries the GPI-anchor amidated serine lipid modification. A propeptide spans 565 to 586 (SGTSSSKGIIFYVLFSILYLIF) (removed in mature form).

The protein belongs to the type-B carboxylesterase/lipase family. In terms of assembly, isoform H form is a homodimer; the asymmetric form is a disulfide-bonded oligomer composed of a collagenic subunit (Q) and a variable number of T catalytic subunits. An interchain disulfide bond is present in what becomes position 593 of the T isoform. In terms of tissue distribution, found in the synapses and to a lower extent in extrajunctional areas of muscle and nerve, and on erythrocyte membranes.

The protein resides in the cell membrane. It localises to the synapse. It catalyses the reaction acetylcholine + H2O = choline + acetate + H(+). With respect to regulation, inhibited by substrate concentrations above 0.5 mM. In terms of biological role, terminates signal transduction at the neuromuscular junction by rapid hydrolysis of the acetylcholine released into the synaptic cleft. May be involved in cell-cell interactions. This Tetronarce californica (Pacific electric ray) protein is Acetylcholinesterase (ache).